Reading from the N-terminus, the 212-residue chain is CRIB domain-containing protein RIC6 (212 aa).

In terms of domain architecture, CRIB spans 34 to 47 (IGNPTDVKHVAHIG). The interval 51-212 (PSANATAPSW…MPQFDNRDDF (162 aa)) is disordered. Residues 53–65 (ANATAPSWMTEFN) are compositionally biased toward polar residues. Residues 106-121 (AASEKGSPTKDKSSDK) show a composition bias toward basic and acidic residues. Positions 192 to 202 (EYMSETGSVRS) are enriched in polar residues.

Interacts with ARAC11/ROP1. As to expression, expressed in flowers and pollen.

It is found in the cell membrane. Functionally, functions as a downstream effector of Rho-related GTP binding proteins of the 'Rho of Plants' (ROPs) family. Participates in the propagation of ROP GTPase signals in specific cellular responses. Is involved in pollen tube growth regulation through its interaction with ARAC11/ROP1. This Arabidopsis thaliana (Mouse-ear cress) protein is CRIB domain-containing protein RIC6 (RIC6).